Reading from the N-terminus, the 507-residue chain is Dihydrolipoyl dehydrogenase 1, mitochondrial (507 aa).

Residues 1–36 (MAMASLARRKAYFLTRNLSNSPTDALRFSFSLSRGF) constitute a mitochondrion transit peptide. FAD is bound by residues 73-82 (EKRGALGGTC), K91, G155, and 184-186 (TGS). C82 and C87 are disulfide-bonded. NAD(+)-binding positions include 221-228 (GAGYIGLE), E244, V278, and G313. FAD-binding positions include D354 and 360 to 363 (MLAH). The active-site Proton acceptor is the H486.

Belongs to the class-I pyridine nucleotide-disulfide oxidoreductase family. As to quaternary structure, homodimer. Part of both the glycine cleavage system composed of four proteins: P, T, L and H and of the pyruvate dehydrogenase complex containing multiple copies of three enzymatic components: pyruvate dehydrogenase (E1), dihydrolipoamide acetyltransferase (E2) and lipoamide dehydrogenase (E3). FAD is required as a cofactor. S-nytrosylated at unknown positions. As to expression, preferentially expressed in leaves, flowers and siliques and at a lower level in roots and stems.

It localises to the mitochondrion matrix. It catalyses the reaction N(6)-[(R)-dihydrolipoyl]-L-lysyl-[protein] + NAD(+) = N(6)-[(R)-lipoyl]-L-lysyl-[protein] + NADH + H(+). In terms of biological role, lipoamide dehydrogenase is a component of the glycine decarboxylase (GDC) or glycine cleavage system as well as of the alpha-ketoacid dehydrogenase complexes. LPD1 is probably the protein most often associated with the glycine decarboxylase complex while LPD2 is probably incorporated into alpha-ketoacid dehydrogenase complexes. This Arabidopsis thaliana (Mouse-ear cress) protein is Dihydrolipoyl dehydrogenase 1, mitochondrial (LPD1).